We begin with the raw amino-acid sequence, 744 residues long: Scytalone dehydratase-like protein Arp1 (744 aa).

Residue Tyr621 coordinates substrate. Catalysis depends on residues His656 and His681. Asn702 contacts substrate.

The protein belongs to the scytalone dehydratase family. In terms of assembly, homotrimer. Each subunit contains an active site, located in the central part of the hydrophobic core of the monomer, which functions independently.

Its function is as follows. Scytalone dehydratase-like protein; part of the Pks2 gene cluster that mediates the formation of infectious structures (appressoria), enabling these fungi to kill insects faster. The product of the Pks2 gene cluster is different from the one of Pks1 and has still not been identified. This is Scytalone dehydratase-like protein Arp1 from Metarhizium brunneum (strain ARSEF 3297).